The chain runs to 483 residues: Wax ester synthase/diacylglycerol acyltransferase 10 (483 aa).

Topologically, residues 1-203 are cytoplasmic; that stretch reads MTKEEVEEEP…SINAVYYAVR (203 aa). The active-site Proton acceptor is the His143. The helical transmembrane segment at 204–222 threads the bilayer; the sequence is LIWNTIVDLLLLWATSLFF. The Lumenal segment spans residues 223–483; the sequence is KDTETPISEG…MKDTLSGKSD (261 aa). N-linked (GlcNAc...) asparagine glycans are attached at residues Asn394 and Asn399.

In the N-terminal section; belongs to the long-chain O-acyltransferase family. As to expression, mostly expressed in roots.

Its subcellular location is the cell membrane. The protein localises to the endoplasmic reticulum membrane. It carries out the reaction an acyl-CoA + a 1,2-diacyl-sn-glycerol = a triacyl-sn-glycerol + CoA. It catalyses the reaction a long chain fatty alcohol + a fatty acyl-CoA = a wax ester + CoA. Its pathway is glycerolipid metabolism; triacylglycerol biosynthesis. It functions in the pathway lipid metabolism. In terms of biological role, bifunctional wax ester synthase/diacylglycerol acyltransferase. Involved in cuticular wax biosynthesis. This Arabidopsis thaliana (Mouse-ear cress) protein is Wax ester synthase/diacylglycerol acyltransferase 10.